Here is a 426-residue protein sequence, read N- to C-terminus: Serine--tRNA ligase (426 aa).

230–232 contributes to the L-serine binding site; sequence TAE. 261-263 lines the ATP pocket; the sequence is RSE. Glu284 provides a ligand contact to L-serine. 348 to 351 provides a ligand contact to ATP; the sequence is EISS. Residue Ser384 participates in L-serine binding.

Belongs to the class-II aminoacyl-tRNA synthetase family. Type-1 seryl-tRNA synthetase subfamily. As to quaternary structure, homodimer. The tRNA molecule binds across the dimer.

The protein localises to the cytoplasm. It catalyses the reaction tRNA(Ser) + L-serine + ATP = L-seryl-tRNA(Ser) + AMP + diphosphate + H(+). It carries out the reaction tRNA(Sec) + L-serine + ATP = L-seryl-tRNA(Sec) + AMP + diphosphate + H(+). It functions in the pathway aminoacyl-tRNA biosynthesis; selenocysteinyl-tRNA(Sec) biosynthesis; L-seryl-tRNA(Sec) from L-serine and tRNA(Sec): step 1/1. Its function is as follows. Catalyzes the attachment of serine to tRNA(Ser). Is also able to aminoacylate tRNA(Sec) with serine, to form the misacylated tRNA L-seryl-tRNA(Sec), which will be further converted into selenocysteinyl-tRNA(Sec). This is Serine--tRNA ligase from Streptococcus mutans serotype c (strain ATCC 700610 / UA159).